We begin with the raw amino-acid sequence, 793 residues long: Endonuclease MutS2 (793 aa).

Residue 335–342 (GPNTGGKT) coordinates ATP. Residues 718–793 (IDVRGYNLEE…ESGVTIVELR (76 aa)) form the Smr domain.

Belongs to the DNA mismatch repair MutS family. MutS2 subfamily. Homodimer. Binds to stalled ribosomes, contacting rRNA.

Its function is as follows. Endonuclease that is involved in the suppression of homologous recombination and thus may have a key role in the control of bacterial genetic diversity. In terms of biological role, acts as a ribosome collision sensor, splitting the ribosome into its 2 subunits. Detects stalled/collided 70S ribosomes which it binds and splits by an ATP-hydrolysis driven conformational change. Acts upstream of the ribosome quality control system (RQC), a ribosome-associated complex that mediates the extraction of incompletely synthesized nascent chains from stalled ribosomes and their subsequent degradation. Probably generates substrates for RQC. The polypeptide is Endonuclease MutS2 (Acetivibrio thermocellus (strain ATCC 27405 / DSM 1237 / JCM 9322 / NBRC 103400 / NCIMB 10682 / NRRL B-4536 / VPI 7372) (Clostridium thermocellum)).